A 104-amino-acid chain; its full sequence is Large ribosomal subunit protein uL24 (104 aa).

The protein belongs to the universal ribosomal protein uL24 family. In terms of assembly, part of the 50S ribosomal subunit.

Functionally, one of two assembly initiator proteins, it binds directly to the 5'-end of the 23S rRNA, where it nucleates assembly of the 50S subunit. Its function is as follows. One of the proteins that surrounds the polypeptide exit tunnel on the outside of the subunit. The sequence is that of Large ribosomal subunit protein uL24 from Buchnera aphidicola subsp. Baizongia pistaciae (strain Bp).